The chain runs to 402 residues: Multidrug resistance protein MdtH (402 aa).

The Cytoplasmic segment spans residues 1 to 12 (MSRVSQARNLGK). A helical transmembrane segment spans residues 13–33 (YFLLIDNMLVVLGFFVVFPLI). The Periplasmic segment spans residues 34 to 98 (SIRFVDQMGW…GFATMGIAHE (65 aa)). The chain crosses the membrane as a helical span at residues 99–116 (PWLLWFSCLLSGLGGTLF). At 117–138 (DPPRSALVVKLIRPQQRGRFFS) the chain is on the cytoplasmic side. A helical membrane pass occupies residues 139–159 (LLMMQDSASAVIGALLGSWLL). Residues 160–164 (QYDFR) lie on the Periplasmic side of the membrane. The helical transmembrane segment at 165–185 (LVCATGAVLFVLCAAFNAWLL) threads the bilayer. Topologically, residues 186–213 (PAWKLSTVRTPVREGMTRVMRDKRFVTY) are cytoplasmic. The chain crosses the membrane as a helical span at residues 214–234 (VLTLAGYYMLAVQVMLMLPIM). Residues 235–243 (VNDVAGAPS) are Periplasmic-facing. Residues 244–264 (AVKWMYAIEACLSLTLLYPIA) traverse the membrane as a helical segment. At 265-276 (RWSEKHFRLEHR) the chain is on the cytoplasmic side. Residues 277-297 (LMAGLLIMSLSMMPVGMVSGL) traverse the membrane as a helical segment. At 298-299 (QQ) the chain is on the periplasmic side. Residues 300 to 320 (LFTLICLFYIGSIIAEPARET) form a helical membrane-spanning segment. Over 321–339 (LSASLADARARGSYMGFSR) the chain is Cytoplasmic. A helical membrane pass occupies residues 340–360 (LGLAIGGAIGYIGGGWLFDLG). Topologically, residues 361–367 (KSAHQPE) are periplasmic. A helical transmembrane segment spans residues 368–388 (LPWMMLGIIGIFTFLALGWQF). Over 389–402 (SQKRAARRLLERDA) the chain is Cytoplasmic.

Belongs to the major facilitator superfamily. DHA1 family. MdtH (TC 2.A.1.2.21) subfamily.

Its subcellular location is the cell inner membrane. The protein is Multidrug resistance protein MdtH of Shigella flexneri.